Consider the following 211-residue polypeptide: Glutathione S-transferase class-mu 28 kDa isozyme (211 aa).

Positions 4–86 constitute a GST N-terminal domain; it reads DHIKVIYFNG…YMAKKHHMMG (83 aa). Glutathione is bound by residues Tyr-10, Arg-16, Trp-41, Lys-45, Leu-53, Glu-70, Ser-71, and Asp-104. The GST C-terminal domain occupies 88–211; the sequence is TDEEYYNVEK…YLSDRAATPF (124 aa).

It belongs to the GST superfamily. Mu family. Homodimer.

It carries out the reaction RX + glutathione = an S-substituted glutathione + a halide anion + H(+). In terms of biological role, conjugation of reduced glutathione to a wide number of exogenous and endogenous hydrophobic electrophiles. Functionally, GST isoenzymes appear to play a central role in the parasite detoxification system. Other functions are also suspected including a role in increasing the solubility of haematin in the parasite gut. In Schistosoma bovis (Blood fluke), this protein is Glutathione S-transferase class-mu 28 kDa isozyme.